A 359-amino-acid polypeptide reads, in one-letter code: Peptide chain release factor 1 (359 aa).

N5-methylglutamine is present on Gln235. Residues 283–309 are disordered; sequence QKAESERSQARRSQVGSGDRSERIRTY.

The protein belongs to the prokaryotic/mitochondrial release factor family. In terms of processing, methylated by PrmC. Methylation increases the termination efficiency of RF1.

It localises to the cytoplasm. In terms of biological role, peptide chain release factor 1 directs the termination of translation in response to the peptide chain termination codons UAG and UAA. This chain is Peptide chain release factor 1, found in Brucella melitensis biotype 2 (strain ATCC 23457).